Here is a 117-residue protein sequence, read N- to C-terminus: Gamma-aminobutyric acid receptor-associated protein-like 1 (117 aa).

A lipid anchor (Phosphatidylethanolamine amidated glycine; alternate) is attached at glycine 116. A lipid anchor (Phosphatidylserine amidated glycine; alternate) is attached at glycine 116. A propeptide (removed in mature form) is located at residue lysine 117.

It belongs to the ATG8 family. As to quaternary structure, interacts with ATG13, OPRK1, RB1CC1 and ULK1. Interacts with TP53INP1 and TP53INP2. Directly interacts with SQSTM1. Interacts with ATG3, ATG7 and MAP15. Interacts with TECPR2. Interacts with TBC1D5. Interacts with MAPK15. Interacts with TRIM5. Interacts with MEFV and TRIM21. Interacts with WDFY3. Interacts with the reticulophagy receptor TEX264. Interacts with UBA5. Interacts with KBTBD6 and KBTBD7; the interaction is direct. Interacts with reticulophagy regulators RETREG1, RETREG2 and RETREG3. Interacts with IRGM. Interacts with DNM2. Interacts with NCOA4 (via C-terminus). The precursor molecule is cleaved by ATG4 (ATG4A, ATG4B, ATG4C or ATG4D) to expose the glycine at the C-terminus and form the cytosolic form, GABARAPL1-I. The processed form is then activated by APG7L/ATG7, transferred to ATG3 and conjugated to phosphatidylethanolamine (PE) phospholipid to form the membrane-bound form, GABARAPL1-II. During non-canonical autophagy, the processed form is conjugated to phosphatidylserine (PS) phospholipid. ATG4 proteins also mediate the delipidation of PE-conjugated forms required for GABARAPL1 recycling when autophagosomes fuse with lysosomes. In addition, ATG4B and ATG4D mediate delipidation of ATG8 proteins conjugated to PS during non-canonical autophagy. ATG4B constitutes the major protein for proteolytic activation. ATG4D is the main enzyme for delipidation activity.

It is found in the cytoplasmic vesicle. Its subcellular location is the autophagosome. The protein resides in the cytoplasmic vesicle membrane. It localises to the cytoplasm. The protein localises to the cytoskeleton. It is found in the endoplasmic reticulum. Its subcellular location is the golgi apparatus. Its function is as follows. Ubiquitin-like modifier that increases cell-surface expression of kappa-type opioid receptor through facilitating anterograde intracellular trafficking of the receptor. Involved in formation of autophagosomal vacuoles. While LC3s are involved in elongation of the phagophore membrane, the GABARAP/GATE-16 subfamily is essential for a later stage in autophagosome maturation. Through its interaction with the reticulophagy receptor TEX264, participates in the remodeling of subdomains of the endoplasmic reticulum into autophagosomes upon nutrient stress, which then fuse with lysosomes for endoplasmic reticulum turnover. The polypeptide is Gamma-aminobutyric acid receptor-associated protein-like 1 (Pongo abelii (Sumatran orangutan)).